Consider the following 440-residue polypeptide: MSLDGVWAPQTANIGDGPAKKASDQASMQTQVLQTASLKDGPAKRAVWVRRDNAETEDPVKSTMSKDRPRLEVTKAVVVDLGTGFCKCGFAGLPKPTHKISTTVGKPYMETAKTGDNRKETFVGHELFNPDIHLKLVNPLRHGIIVDWDTVQDIWEYLFRQEMKIAPEEHAVLVSDPPLSPHTNREKYAEMLFETFNTPAMHIAYQSRLSMYSYGRTSGLVVEVGHGVSYVVPIYEGYPLPSITGRLDYAGSDLTTYLMNLMNNSGKHFSEDHLGIVEDIKTRCCFVALDPIEEKKIPAPEHEIHYTLPDGKEIRLGQERFLCSEMFFKPSLIKSMQLGLHTQTVSCLNKCDIALKRDLMGNILLCGGSTMLRGFPNRLQKELSSMCPNDTPQVNVLPERDTAVWTGGSILASLQGFQPLWVHRLEYEEHGPFFLYRRCF.

The tract at residues 1–29 is disordered; that stretch reads MSLDGVWAPQTANIGDGPAKKASDQASMQ. The tract at residues 36 to 56 is required for interaction with TES; the sequence is ASLKDGPAKRAVWVRRDNAET.

Belongs to the actin family. Interacts (via N-terminus) with TES (via LIM domain 2). Heterodimer with TES; the heterodimer interacts with ENAH to form a heterotrimer. Interacts with ACTL9. Interacts with CYLC1; the interaction may be relevant for proper acrosome attachment to the nuclear envelope. As to expression, detected in testis. Detected at the acrosome of round spermatids (at protein level). Detected in adult and embryonic testis. Detected in developing male germ cells.

The protein resides in the cytoplasm. It is found in the cytoskeleton. It localises to the golgi apparatus. The protein localises to the nucleus. Its subcellular location is the cytoplasmic vesicle. The protein resides in the secretory vesicle. It is found in the acrosome. Essential for normal spermatogenesis and male fertility. Required for normal sperm head morphology, acroplaxome formation, acrosome attachment, and acrosome granule stability. May anchor and stabilize acrosomal adherence to the acroplaxome at least in part by facilitating the presence of F-actin in the subacrosomal space. May play an important role in formation and fusion of Golgi-derived vesicles during acrosome biogenesis. This Mus musculus (Mouse) protein is Actin-like protein 7A (Actl7a).